A 501-amino-acid chain; its full sequence is Lysine--tRNA ligase (501 aa).

Mg(2+) contacts are provided by E402 and E409.

Belongs to the class-II aminoacyl-tRNA synthetase family. Homodimer. It depends on Mg(2+) as a cofactor.

It is found in the cytoplasm. It catalyses the reaction tRNA(Lys) + L-lysine + ATP = L-lysyl-tRNA(Lys) + AMP + diphosphate. This Helicobacter pylori (strain ATCC 700392 / 26695) (Campylobacter pylori) protein is Lysine--tRNA ligase (lysS).